Here is a 326-residue protein sequence, read N- to C-terminus: N-acetyl-gamma-glutamyl-phosphate reductase (326 aa).

Cys-155 is an active-site residue.

This sequence belongs to the NAGSA dehydrogenase family. Type 1 subfamily.

The protein resides in the cytoplasm. It catalyses the reaction N-acetyl-L-glutamate 5-semialdehyde + phosphate + NADP(+) = N-acetyl-L-glutamyl 5-phosphate + NADPH + H(+). It participates in amino-acid biosynthesis; L-arginine biosynthesis; N(2)-acetyl-L-ornithine from L-glutamate: step 3/4. Functionally, catalyzes the NADPH-dependent reduction of N-acetyl-5-glutamyl phosphate to yield N-acetyl-L-glutamate 5-semialdehyde. The chain is N-acetyl-gamma-glutamyl-phosphate reductase from Shewanella woodyi (strain ATCC 51908 / MS32).